A 557-amino-acid polypeptide reads, in one-letter code: Coiled-coil domain-containing protein 22 homolog (557 aa).

2 coiled-coil regions span residues 260 to 350 (RLGQ…LQSQ) and 489 to 554 (ELTA…AGRN).

Belongs to the CCDC22 family.

The chain is Coiled-coil domain-containing protein 22 homolog from Anopheles gambiae (African malaria mosquito).